The sequence spans 94 residues: Evasin P1104 (94 aa).

The first 28 residues, 1–28, serve as a signal peptide directing secretion; sequence MASNLFTIFQLAGFVAIVFIVNLHSVSA. 3 disulfides stabilise this stretch: cysteine 48/cysteine 66, cysteine 52/cysteine 68, and cysteine 62/cysteine 79. N-linked (GlcNAc...) asparagine glycosylation is present at asparagine 51.

It localises to the secreted. In terms of biological role, salivary chemokine-binding protein which binds to host chemokines CXCL1, CXCL2, CXCL3, CXCL5, CXCL6, CXCL12 and CXCL13. The protein is Evasin P1104 of Ixodes ricinus (Common tick).